The sequence spans 2332 residues: Phosphatidylinositol phosphatase PTPRQ (2332 aa).

A signal peptide spans 1 to 35 (MKKVPIKPEQPEKLRAFNISTHSFSLHWSLPSGHV). Fibronectin type-III domains follow at residues 36–99 (ERYQ…TKPG), 100–195 (PPVF…TAES), 199–294 (KVVN…SSST), 350–438 (PPQN…PPDV), 441–539 (AVFD…SHPD), 514–606 (GLYE…SVRT), 610–705 (VPSS…TSED), 710–799 (SPQD…TSET), 804–894 (APEN…TEED), 899–988 (PPQD…TPEG), 993–1093 (PPKD…TDQD), 1098–1190 (FVGN…TEED), 1192–1282 (PETS…TDES), 1287–1380 (PPQN…TQES), 1384–1470 (VVQN…LPET), 1474–1578 (VPTN…TLPG), 1583–1681 (PPEN…TLES), and 1686–1787 (PPNN…IKAP). Residues 36-1947 (ERYQVDLVPD…GEGLSERTVE (1912 aa)) are Extracellular-facing. N-linked (GlcNAc...) asparagine glycosylation occurs at Asn-94. Asn-202 and Asn-394 each carry an N-linked (GlcNAc...) asparagine glycan. Asn-944, Asn-1038, Asn-1080, and Asn-1101 each carry an N-linked (GlcNAc...) asparagine glycan. Asn-1290 and Asn-1295 each carry an N-linked (GlcNAc...) asparagine glycan. N-linked (GlcNAc...) asparagine glycosylation occurs at Asn-1844. The chain crosses the membrane as a helical span at residues 1948 to 1968 (IILSVTLCILSIILLGTAIFA). Topologically, residues 1969–2332 (FARIRQKQKE…VELEWEETTM (364 aa)) are cytoplasmic. One can recognise a Tyrosine-protein phosphatase domain in the interval 2036–2292 (FQEEFSELPK…IFLHQCILDL (257 aa)). Cys-2233 functions as the Phosphocysteine intermediate in the catalytic mechanism.

It belongs to the protein-tyrosine phosphatase family. Receptor class 2A subfamily. In terms of assembly, interacts with TPRN. TPRN, CLIC5 and PTPQR form concentric rings at the base of stereocilia and may form a complex. In terms of tissue distribution, in developing kidney, it localizes to the basal membrane of podocytes, beginning when podocyte progenitors can first be identified in the embryonic kidney (at protein level). Expressed in lung and kidney.

Its subcellular location is the cell projection. It localises to the stereocilium. The protein localises to the apical cell membrane. The protein resides in the basal cell membrane. It catalyses the reaction a 1,2-diacyl-sn-glycero-3-phospho-(1D-myo-inositol-3,4,5-trisphosphate) + H2O = a 1,2-diacyl-sn-glycero-3-phospho-(1D-myo-inositol-4,5-bisphosphate) + phosphate. It carries out the reaction a 1,2-diacyl-sn-glycero-3-phospho-(1D-myo-inositol-3,4,5-trisphosphate) + H2O = a 1,2-diacyl-sn-glycero-3-phospho-(1D-myo-inositol-3,4-bisphosphate) + phosphate. The enzyme catalyses a 1,2-diacyl-sn-glycero-3-phospho-(1D-myo-inositol-3,5-bisphosphate) + H2O = a 1,2-diacyl-sn-glycero-3-phospho-(1D-myo-inositol-5-phosphate) + phosphate. The catalysed reaction is a 1,2-diacyl-sn-glycero-3-phospho-(1D-myo-inositol-3,5-bisphosphate) + H2O = a 1,2-diacyl-sn-glycero-3-phospho-(1D-myo-inositol-3-phosphate) + phosphate. Dephosphorylates phosphatidylinositol phosphates, such as phosphatidylinositol 3,4,5-trisphosphate (PIP3) and phosphatidylinositol 3,5-diphosphates, with preference for PIP3. Phosphate can be hydrolyzed from the D3 and D5 positions in the inositol ring. Has low tyrosine-protein phosphatase activity in vitro; however, the relevance of such activity in vivo is unclear. Plays an important role in adipogenesis of mesenchymal stem cells (MSCs). Regulates the phosphorylation state of AKT1 by regulating the levels of PIP3 in MSCs and preadipocyte cells. Required for hair bundle maturation, a process that enables hair cells to detect and transmit sound and balance signals effectively, therefore affecting auditory function. May act by regulating the level of phosphatidylinositol 4,5-bisphosphate (PIP2) level in the basal region of hair bundles. In Homo sapiens (Human), this protein is Phosphatidylinositol phosphatase PTPRQ (PTPRQ).